We begin with the raw amino-acid sequence, 1241 residues long: DNA-directed RNA polymerase subunit beta (1241 aa).

The segment at Ala1201–Ile1224 is disordered.

The protein belongs to the RNA polymerase beta chain family. As to quaternary structure, the RNAP catalytic core consists of 2 alpha, 1 beta, 1 beta' and 1 omega subunit. When a sigma factor is associated with the core the holoenzyme is formed, which can initiate transcription.

It carries out the reaction RNA(n) + a ribonucleoside 5'-triphosphate = RNA(n+1) + diphosphate. Its function is as follows. DNA-dependent RNA polymerase catalyzes the transcription of DNA into RNA using the four ribonucleoside triphosphates as substrates. The sequence is that of DNA-directed RNA polymerase subunit beta from Alkaliphilus oremlandii (strain OhILAs) (Clostridium oremlandii (strain OhILAs)).